A 162-amino-acid chain; its full sequence is Ribosome-binding factor A (162 aa).

The segment at 121–162 (DEVARVAAGASPAGDPDPYKEPRAEDADDAEVDEPSGSRQAD) is disordered. A compositionally biased stretch (low complexity) spans 125 to 136 (RVAAGASPAGDP).

It belongs to the RbfA family. In terms of assembly, monomer. Binds 30S ribosomal subunits, but not 50S ribosomal subunits or 70S ribosomes.

The protein localises to the cytoplasm. One of several proteins that assist in the late maturation steps of the functional core of the 30S ribosomal subunit. Associates with free 30S ribosomal subunits (but not with 30S subunits that are part of 70S ribosomes or polysomes). Required for efficient processing of 16S rRNA. May interact with the 5'-terminal helix region of 16S rRNA. This chain is Ribosome-binding factor A, found in Rhodococcus jostii (strain RHA1).